The primary structure comprises 438 residues: MSTNFSVPEPTPQLVKVAESAKEASISLGQSTNKQRCEALTEMANALNDNADEILKANVQDLERSEKEGLNKSLLSRLQLTKTKLKGCIDGVLKVSNLADPIGKRQLHRELDENLILERVTVPLGVLGVIFESRPDALIQIASLAVRSGNGALLKGGSEAKDTNQSIMDSLDKGLRKSNVGSGALSLLTTRQESLGLLRLDKFVNLIIPRGSNELVQFIQENTRIPVLGHADGICHLYVDNSVDIDKAISIALDSKIQYPAACNAIETLLIHEDVAEMFLKKGLPIFSSEGVTLKGDTKSQALGVKNKADESDWSKEYLDLILSIKIVRNVNEAIEHIRKYSSRHTEAIVTEDKMVAEKFLSSVDSAGVYHNCSTRFADGFRYGFGAEVGISTQTLPPRGPVGLEGLVTYRYYLRGDGDLVKDFASGDRSFSHIDLPL.

It belongs to the gamma-glutamyl phosphate reductase family.

It is found in the cytoplasm. It catalyses the reaction L-glutamate 5-semialdehyde + phosphate + NADP(+) = L-glutamyl 5-phosphate + NADPH + H(+). The protein operates within amino-acid biosynthesis; L-proline biosynthesis; L-glutamate 5-semialdehyde from L-glutamate: step 2/2. In terms of biological role, catalyzes the NADPH-dependent reduction of L-glutamate 5-phosphate into L-glutamate 5-semialdehyde and phosphate. The product spontaneously undergoes cyclization to form 1-pyrroline-5-carboxylate. This is Gamma-glutamyl phosphate reductase from Prochlorococcus marinus (strain NATL1A).